Reading from the N-terminus, the 231-residue chain is Large ribosomal subunit protein uL1 (231 aa).

Belongs to the universal ribosomal protein uL1 family. Part of the 50S ribosomal subunit.

Binds directly to 23S rRNA. The L1 stalk is quite mobile in the ribosome, and is involved in E site tRNA release. Its function is as follows. Protein L1 is also a translational repressor protein, it controls the translation of the L11 operon by binding to its mRNA. This chain is Large ribosomal subunit protein uL1, found in Herminiimonas arsenicoxydans.